We begin with the raw amino-acid sequence, 348 residues long: Dihydroorotase (348 aa).

Zn(2+) contacts are provided by His17 and His19. Substrate contacts are provided by residues 19-21 and Asn45; that span reads HLR. Zn(2+) contacts are provided by Lys103, His140, and His178. Lys103 is subject to N6-carboxylysine. Position 140 (His140) interacts with substrate. Leu223 is a binding site for substrate. Asp251 contacts Zn(2+). Asp251 is an active-site residue. Residues His255 and Ala267 each contribute to the substrate site.

The protein belongs to the metallo-dependent hydrolases superfamily. DHOase family. Class II DHOase subfamily. In terms of assembly, homodimer. It depends on Zn(2+) as a cofactor.

It carries out the reaction (S)-dihydroorotate + H2O = N-carbamoyl-L-aspartate + H(+). It functions in the pathway pyrimidine metabolism; UMP biosynthesis via de novo pathway; (S)-dihydroorotate from bicarbonate: step 3/3. Catalyzes the reversible cyclization of carbamoyl aspartate to dihydroorotate. The polypeptide is Dihydroorotase (Salmonella paratyphi B (strain ATCC BAA-1250 / SPB7)).